The chain runs to 638 residues: Fructose-1,6-bisphosphatase class 3 (638 aa).

This sequence belongs to the FBPase class 3 family. Requires Mn(2+) as cofactor.

It catalyses the reaction beta-D-fructose 1,6-bisphosphate + H2O = beta-D-fructose 6-phosphate + phosphate. Its pathway is carbohydrate biosynthesis; gluconeogenesis. The chain is Fructose-1,6-bisphosphatase class 3 from Pediococcus pentosaceus (strain ATCC 25745 / CCUG 21536 / LMG 10740 / 183-1w).